The chain runs to 228 residues: 7-cyano-7-deazaguanine synthase (228 aa).

8 to 18 (LSGGMDSATTL) lines the ATP pocket. Zn(2+) is bound by residues C188, C198, C201, and C204.

It belongs to the QueC family. Requires Zn(2+) as cofactor.

It catalyses the reaction 7-carboxy-7-deazaguanine + NH4(+) + ATP = 7-cyano-7-deazaguanine + ADP + phosphate + H2O + H(+). It functions in the pathway purine metabolism; 7-cyano-7-deazaguanine biosynthesis. Catalyzes the ATP-dependent conversion of 7-carboxy-7-deazaguanine (CDG) to 7-cyano-7-deazaguanine (preQ(0)). The polypeptide is 7-cyano-7-deazaguanine synthase (Nitrosomonas europaea (strain ATCC 19718 / CIP 103999 / KCTC 2705 / NBRC 14298)).